The chain runs to 531 residues: MKPGIKISKRYSARNASVITVLLLLIYLIYINKETIQTKYQGSRINHDSGGDSTKDKTHTFTIKEIHFRPLDEKTQSYGSLQVTPEFVNMAKSEFEQNVAVASGDNEDLYDKQLWSASIKSNPWTHQFTLKQGSIKMKRMVNRDPDYVESFLDYAHENPEMARKVHLDWVDESVLAPNVTDKETVISLALMSSNAYVRLPYEGDWRNLSDWNNDLNPDLSVGIGWDSDGVRGHIFSNDDSSVIVIALKGTSAQGLPGSGEDETTDNDKLNDNVLFSCCCARVSYLWKTACDCYVKSYTCDEKCLEQELVRKDRYYQAVLDIYRSVVTAHPNSAIWITGHSLGGALASLLGRTFGAPAVAFEAPGELLATKRLHLPMPPGLPAYQEGVWHIGHTADPIFMGTCNGASSSCSIAGYAMETSCHSGKVCVYDVVTDKGWHVNMLNHRIHTVIDGILTDYDTVAKCKTPDACHDCFNWNYVKGRDVPKKHKSSSSTASSTSAETSTLTVGPSPPEKTTTSCIGRNWIGICTEYGI.

Residues 1–11 (MKPGIKISKRY) lie on the Cytoplasmic side of the membrane. Residues 12–31 (SARNASVITVLLLLIYLIYI) traverse the membrane as a helical; Signal-anchor for type II membrane protein segment. Residues 32–531 (NKETIQTKYQ…WIGICTEYGI (500 aa)) are Lumenal-facing. N-linked (GlcNAc...) asparagine glycans are attached at residues asparagine 178 and asparagine 207. Residue serine 340 is the Charge relay system of the active site. The tract at residues 482–513 (VPKKHKSSSSTASSTSAETSTLTVGPSPPEKT) is disordered. Residues 489–502 (SSSTASSTSAETST) are compositionally biased toward low complexity.

The protein belongs to the AB hydrolase superfamily. Lipase family. As to quaternary structure, binds to both phosphatidylinositol (PI) and phosphatidylinositol 3,5-bisphosphate (PIP2).

The protein localises to the endosome. It is found in the multivesicular body membrane. Its subcellular location is the prevacuolar compartment membrane. The enzyme catalyses a triacylglycerol + H2O = a diacylglycerol + a fatty acid + H(+). In terms of biological role, lipase which is essential for lysis of subvacuolar cytoplasm to vacuole targeted bodies and intravacuolar autophagic bodies. Involved in the lysis of intravacuolar multivesicular body (MVB) vesicles. The intravacuolar membrane disintegration by ATG15 is critical to life span extension. This chain is Putative lipase ATG15 (ATG15), found in Kluyveromyces lactis (strain ATCC 8585 / CBS 2359 / DSM 70799 / NBRC 1267 / NRRL Y-1140 / WM37) (Yeast).